The primary structure comprises 231 residues: 2-phospho-L-lactate guanylyltransferase (231 aa).

Belongs to the CofC family. In terms of assembly, homodimer.

It catalyses the reaction (2S)-2-phospholactate + GTP + H(+) = (2S)-lactyl-2-diphospho-5'-guanosine + diphosphate. The protein operates within cofactor biosynthesis; coenzyme F420 biosynthesis. Guanylyltransferase that catalyzes the activation of (2S)-2-phospholactate (2-PL) as (2S)-lactyl-2-diphospho-5'-guanosine, via the condensation of 2-PL with GTP. It is involved in the biosynthesis of coenzyme F420, a hydride carrier cofactor. The chain is 2-phospho-L-lactate guanylyltransferase from Haloterrigena turkmenica (strain ATCC 51198 / DSM 5511 / JCM 9101 / NCIMB 13204 / VKM B-1734 / 4k) (Halococcus turkmenicus).